The primary structure comprises 955 residues: uncharacterized protein (955 aa).

An N-terminal signal peptide occupies residues 1–24 (MQSSLIKILGVLAIVATLVCFVFA). A disordered region spans residues 127 to 146 (STRPGKSNLDDNGKMIPIPR). The next 6 helical transmembrane spans lie at 597–617 (IKALLILYVMVYGAMFLLGFA), 707–727 (LGLSGIIYFIITVIAVMIVII), 739–759 (AFMATCILIGIAPIFISFLLF), 781–801 (VVLMAGIIVLTQLFTIYLDFV), 818–838 (FIGTILPVALLNVPIFCINWF), and 857–877 (IVALVIIAYGMYGYVEFSGNM). The tract at residues 905 to 955 (LSQVGMDEKTRKGITGRAKERLKQRNETLKQAEKTRKNAPKEEPPKAEIPK) is disordered. Residues 910–955 (MDEKTRKGITGRAKERLKQRNETLKQAEKTRKNAPKEEPPKAEIPK) show a composition bias toward basic and acidic residues.

It belongs to the TrbL/VirB6 family.

It is found in the cell membrane. This is an uncharacterized protein from Rickettsia bellii (strain RML369-C).